The chain runs to 112 residues: Ribosome-binding factor A (112 aa).

This sequence belongs to the RbfA family. Monomer. Binds 30S ribosomal subunits, but not 50S ribosomal subunits or 70S ribosomes.

It is found in the cytoplasm. Functionally, one of several proteins that assist in the late maturation steps of the functional core of the 30S ribosomal subunit. Associates with free 30S ribosomal subunits (but not with 30S subunits that are part of 70S ribosomes or polysomes). Required for efficient processing of 16S rRNA. May interact with the 5'-terminal helix region of 16S rRNA. This Mycoplasma genitalium (strain ATCC 33530 / DSM 19775 / NCTC 10195 / G37) (Mycoplasmoides genitalium) protein is Ribosome-binding factor A.